The sequence spans 140 residues: Large ribosomal subunit protein uL11 (140 aa).

Belongs to the universal ribosomal protein uL11 family. Part of the ribosomal stalk of the 50S ribosomal subunit. Interacts with L10 and the large rRNA to form the base of the stalk. L10 forms an elongated spine to which L12 dimers bind in a sequential fashion forming a multimeric L10(L12)X complex. One or more lysine residues are methylated.

Its function is as follows. Forms part of the ribosomal stalk which helps the ribosome interact with GTP-bound translation factors. The protein is Large ribosomal subunit protein uL11 of Halothermothrix orenii (strain H 168 / OCM 544 / DSM 9562).